Here is a 396-residue protein sequence, read N- to C-terminus: Small ribosomal subunit protein uS9m (396 aa).

The segment at 374–396 (PRVRERKKPGQEGARRKFTWKKR) is disordered.

Belongs to the universal ribosomal protein uS9 family. As to quaternary structure, component of the mitochondrial ribosome small subunit (28S) which comprises a 12S rRNA and about 30 distinct proteins.

It is found in the mitochondrion. The polypeptide is Small ribosomal subunit protein uS9m (MRPS9) (Bos taurus (Bovine)).